The following is a 607-amino-acid chain: Arginine--tRNA ligase (607 aa).

Residues P147 to H157 carry the 'HIGH' region motif.

It belongs to the class-I aminoacyl-tRNA synthetase family. In terms of assembly, monomer.

The protein resides in the cytoplasm. It catalyses the reaction tRNA(Arg) + L-arginine + ATP = L-arginyl-tRNA(Arg) + AMP + diphosphate. The polypeptide is Arginine--tRNA ligase (Prochlorococcus marinus (strain NATL1A)).